A 463-amino-acid chain; its full sequence is Asparagine--tRNA ligase (463 aa).

This sequence belongs to the class-II aminoacyl-tRNA synthetase family. As to quaternary structure, homodimer.

The protein resides in the cytoplasm. It carries out the reaction tRNA(Asn) + L-asparagine + ATP = L-asparaginyl-tRNA(Asn) + AMP + diphosphate + H(+). The chain is Asparagine--tRNA ligase from Clostridium botulinum (strain ATCC 19397 / Type A).